We begin with the raw amino-acid sequence, 147 residues long: Hemoglobin subunit delta (147 aa).

The region spanning 3-147 (HLTADETALV…VANALAHKYH (145 aa)) is the Globin domain. S51 carries the post-translational modification Phosphoserine. Heme b is bound by residues H64 and H93.

It belongs to the globin family. Heterotetramer of two delta chains and two alpha chains. Red blood cells.

In Dugong dugon (Dugong), this protein is Hemoglobin subunit delta (HBD).